We begin with the raw amino-acid sequence, 326 residues long: F-box/LRR-repeat protein 12 (326 aa).

Positions 1–47 constitute an F-box domain; that stretch reads MATLFDLPDLVLLEIFSYLPVRDRIRISRVCHRWKRLVDDRWLWRHV. 8 LRR repeats span residues 51-78, 86-111, 113-133, 161-185, 186-211, 212-236, 237-261, and 266-291; these read LYTM…RMGG, APQL…CLHV, DLSM…ELHS, VPAF…VLGG, TYRV…EVLG, CTLS…IRLT, VGGL…CFQG, and PDMP…EVQG.

As to quaternary structure, interacts with SKP1 and CUL1.

The protein operates within protein modification; protein ubiquitination. Its function is as follows. Substrate-recognition component of the SCF (SKP1-CUL1-F-box protein)-type E3 ubiquitin ligase complex. Mediates the polyubiquitination and proteasomal degradation of CAMK1 leading to disruption of cyclin D1/CDK4 complex assembly which results in G1 cell cycle arrest in lung epithelia. This chain is F-box/LRR-repeat protein 12 (Fbxl12), found in Mus musculus (Mouse).